The following is a 249-amino-acid chain: Caffeoyl-CoA O-methyltransferase 1 (249 aa).

Lys23 lines the substrate pocket. S-adenosyl-L-methionine is bound by residues Thr65, Glu87, Gly89–Val90, Ser95, Asp113, and Ala142. Substrate is bound at residue Asp165. Asp165 provides a ligand contact to a divalent metal cation. Asp167 lines the S-adenosyl-L-methionine pocket. A divalent metal cation contacts are provided by Asp191 and Asn192. Asn196 contacts substrate.

The protein belongs to the class I-like SAM-binding methyltransferase superfamily. Cation-dependent O-methyltransferase family. CCoAMT subfamily. The cofactor is a divalent metal cation. In terms of tissue distribution, mostly expressed in petal limbs and tubes, and, at low levels, in flower buds, stamens, pistils, stems, roots and leaves.

The protein localises to the cytoplasm. The protein resides in the cytosol. The enzyme catalyses (E)-caffeoyl-CoA + S-adenosyl-L-methionine = (E)-feruloyl-CoA + S-adenosyl-L-homocysteine + H(+). It catalyses the reaction (E)-5-hydroxyferuloyl-CoA + S-adenosyl-L-methionine = (E)-sinapoyl-CoA + S-adenosyl-L-homocysteine + H(+). It functions in the pathway aromatic compound metabolism; phenylpropanoid biosynthesis. Functionally, involved in the production of floral volatile phenylpropanoids in flowers of fragrant cultivars (e.g. cv. Mitchell and cv. V26) from cinnamic acid, a common precursor with the anthocyanin biosynthesis pathway involved in flower pigmentation. Methylates caffeoyl-CoA to feruloyl-CoA, also able to methylate 5-hydroxyferuloyl-CoA. The chain is Caffeoyl-CoA O-methyltransferase 1 from Petunia hybrida (Petunia).